A 95-amino-acid polypeptide reads, in one-letter code: Heteroscorpine-1 (95 aa).

The signal sequence occupies residues 1–19 (MNSKLTALIFLGLVAIASC). The 41-residue stretch at 55-95 (EFQCVANIDTMGNCETHCQKTSGEKGFCHGTKCKCGKPLSY) folds into the BetaSPN-type CS-alpha/beta domain. 3 disulfide bridges follow: C58/C82, C68/C87, and C72/C89.

This sequence belongs to the long chain scorpion toxin family. Class 3 subfamily. Contains 3 disulfide bonds. Expressed by the venom gland.

The protein localises to the secreted. Has antibacterial activity against B.subtilis, K.pneumoniae and P.aeruginosa. This Heterometrus laoticus (Thai giant scorpion) protein is Heteroscorpine-1.